The chain runs to 201 residues: ADP-ribosylation factor-like protein 4D (201 aa).

Gly-2 carries the N-myristoyl glycine lipid modification. GTP is bound by residues 28 to 35 (GLDSAGKT), 76 to 80 (DVGGQ), and 135 to 138 (NKQD).

Belongs to the small GTPase superfamily. Arf family. In terms of assembly, interacts with CYTH2; the interaction is direct and ARL4D GTP-dependent. Does not interact with ARL4D.

The protein resides in the nucleus. It is found in the nucleolus. It localises to the cell membrane. The protein localises to the cytoplasm. In terms of biological role, small GTP-binding protein which cycles between an inactive GDP-bound and an active GTP-bound form, and the rate of cycling is regulated by guanine nucleotide exchange factors (GEF) and GTPase-activating proteins (GAP). GTP-binding protein that does not act as an allosteric activator of the cholera toxin catalytic subunit. Recruits CYTH1, CYTH2, CYTH3 and CYTH4 to the plasma membrane in GDP-bound form. This Mus musculus (Mouse) protein is ADP-ribosylation factor-like protein 4D (Arl4d).